Here is a 250-residue protein sequence, read N- to C-terminus: MNKFKYLLFLVVFAVFFLTFAFFDNSSKSHQDDDEQKPIILIHDVSPVYFKELKEIVKIIDKYHYQNRSYLFLIVNHANKYNLKNYPEFVDYLHKLEKEGYHIEFHAYNHIDDEFNCNKTVAEEKLNKSFKILEECGFNPKKIKYFIPPRYKLSEDAEKLFLGRNITIILENKMITEKDGKIVEISITNREYTWYLPKPLVKVAEKIATTDYKLSIKENRKFFLSIHPKAVNYGSGLEFLDYFLNETSKN.

The chain crosses the membrane as a helical span at residues 4 to 24 (FKYLLFLVVFAVFFLTFAFFD).

The protein localises to the membrane. This is an uncharacterized protein from Methanocaldococcus jannaschii (strain ATCC 43067 / DSM 2661 / JAL-1 / JCM 10045 / NBRC 100440) (Methanococcus jannaschii).